The sequence spans 139 residues: ATP synthase epsilon chain (139 aa).

The protein belongs to the ATPase epsilon chain family. As to quaternary structure, F-type ATPases have 2 components, CF(1) - the catalytic core - and CF(0) - the membrane proton channel. CF(1) has five subunits: alpha(3), beta(3), gamma(1), delta(1), epsilon(1). CF(0) has three main subunits: a, b and c.

The protein resides in the cell membrane. In terms of biological role, produces ATP from ADP in the presence of a proton gradient across the membrane. This chain is ATP synthase epsilon chain, found in Streptococcus sanguinis.